The sequence spans 489 residues: Betaine aldehyde dehydrogenase (489 aa).

Thr26 and Asp93 together coordinate K(+). Gly150–Trp152 provides a ligand contact to NAD(+). Lys162 functions as the Charge relay system in the catalytic mechanism. Lys176–Glu179 contributes to the NAD(+) binding site. A K(+)-binding site is contributed by Val180. Gly229–Thr232 lines the NAD(+) pocket. Leu245 contacts K(+). Glu251 functions as the Proton acceptor in the catalytic mechanism. NAD(+) contacts are provided by Gly253, Cys285, and Glu386. Cys285 (nucleophile) is an active-site residue. A Cysteine sulfenic acid (-SOH) modification is found at Cys285. 2 residues coordinate K(+): Lys456 and Gly459. Glu463 functions as the Charge relay system in the catalytic mechanism.

The protein belongs to the aldehyde dehydrogenase family. In terms of assembly, dimer of dimers. Requires K(+) as cofactor.

The enzyme catalyses betaine aldehyde + NAD(+) + H2O = glycine betaine + NADH + 2 H(+). It participates in amine and polyamine biosynthesis; betaine biosynthesis via choline pathway; betaine from betaine aldehyde: step 1/1. Involved in the biosynthesis of the osmoprotectant glycine betaine. Catalyzes the irreversible oxidation of betaine aldehyde to the corresponding acid. This is Betaine aldehyde dehydrogenase from Burkholderia pseudomallei (strain 1106a).